Consider the following 120-residue polypeptide: Small ribosomal subunit protein eS24 (120 aa).

A disordered region spans residues Arg101–Gly120.

This sequence belongs to the eukaryotic ribosomal protein eS24 family.

This chain is Small ribosomal subunit protein eS24, found in Saccharolobus islandicus (strain Y.N.15.51 / Yellowstone #2) (Sulfolobus islandicus).